The following is a 279-amino-acid chain: Pantothenate synthetase (279 aa).

26 to 33 contacts ATP; it reads MGNLHEGH. Residue His33 is the Proton donor of the active site. (R)-pantoate is bound at residue Gln57. Residue Gln57 coordinates beta-alanine. 144–147 is a binding site for ATP; that stretch reads GKKD. Gln150 is a (R)-pantoate binding site. ATP is bound by residues Val173 and 181-184; that span reads LSSR.

This sequence belongs to the pantothenate synthetase family. As to quaternary structure, homodimer.

It localises to the cytoplasm. It catalyses the reaction (R)-pantoate + beta-alanine + ATP = (R)-pantothenate + AMP + diphosphate + H(+). It functions in the pathway cofactor biosynthesis; (R)-pantothenate biosynthesis; (R)-pantothenate from (R)-pantoate and beta-alanine: step 1/1. In terms of biological role, catalyzes the condensation of pantoate with beta-alanine in an ATP-dependent reaction via a pantoyl-adenylate intermediate. The sequence is that of Pantothenate synthetase from Burkholderia cenocepacia (strain ATCC BAA-245 / DSM 16553 / LMG 16656 / NCTC 13227 / J2315 / CF5610) (Burkholderia cepacia (strain J2315)).